Here is an 802-residue protein sequence, read N- to C-terminus: Cullin-4 (802 aa).

Composition is skewed to low complexity over residues 1 to 33 and 656 to 676; these read MNFN…NNNN and STSS…ASGS. Disordered stretches follow at residues 1–43 and 656–686; these read MNFN…SLAG and STSS…GGAT. The region spanning 734–794 is the Cullin neddylation domain; it reads DRQYQVDAAI…KEYLCRDPEN (61 aa). A Glycyl lysine isopeptide (Lys-Gly) (interchain with G-Cter in NEDD8) cross-link involves residue Lys748.

This sequence belongs to the cullin family. In terms of processing, neddylated. Deneddylated via its interaction with the COP9 signalosome (CSN) complex.

The protein operates within protein modification; protein ubiquitination. In terms of biological role, probable core component of cullin-based SCF-like E3 ubiquitin-protein ligase complexes which mediate the ubiquitination and subsequent proteasomal degradation of target proteins. The E3 ubiquitin-protein ligase activity of the complex is dependent on the neddylation of the cullin subunit. The protein is Cullin-4 (culD) of Dictyostelium discoideum (Social amoeba).